A 252-amino-acid polypeptide reads, in one-letter code: Imidazole glycerol phosphate synthase subunit HisF (252 aa).

Residues Asp13 and Asp132 contribute to the active site.

Belongs to the HisA/HisF family. In terms of assembly, heterodimer of HisH and HisF.

It localises to the cytoplasm. The enzyme catalyses 5-[(5-phospho-1-deoxy-D-ribulos-1-ylimino)methylamino]-1-(5-phospho-beta-D-ribosyl)imidazole-4-carboxamide + L-glutamine = D-erythro-1-(imidazol-4-yl)glycerol 3-phosphate + 5-amino-1-(5-phospho-beta-D-ribosyl)imidazole-4-carboxamide + L-glutamate + H(+). It functions in the pathway amino-acid biosynthesis; L-histidine biosynthesis; L-histidine from 5-phospho-alpha-D-ribose 1-diphosphate: step 5/9. IGPS catalyzes the conversion of PRFAR and glutamine to IGP, AICAR and glutamate. The HisF subunit catalyzes the cyclization activity that produces IGP and AICAR from PRFAR using the ammonia provided by the HisH subunit. This chain is Imidazole glycerol phosphate synthase subunit HisF, found in Campylobacter hominis (strain ATCC BAA-381 / DSM 21671 / CCUG 45161 / LMG 19568 / NCTC 13146 / CH001A).